The following is a 468-amino-acid chain: Probable protein phosphatase 2C 52 (468 aa).

A PPM-type phosphatase domain is found at 67 to 372; that stretch reads SSCIFTQQGR…DDCAVVCLFL (306 aa). Mn(2+) contacts are provided by aspartate 102, glycine 103, aspartate 317, and aspartate 363. Positions 413–429 are enriched in polar residues; that stretch reads RSSSDQENETYGNVNTE. A disordered region spans residues 413 to 442; the sequence is RSSSDQENETYGNVNTETDAEDEKTVGDQN.

It belongs to the PP2C family. It depends on Mg(2+) as a cofactor. Requires Mn(2+) as cofactor.

The catalysed reaction is O-phospho-L-seryl-[protein] + H2O = L-seryl-[protein] + phosphate. The enzyme catalyses O-phospho-L-threonyl-[protein] + H2O = L-threonyl-[protein] + phosphate. The protein is Probable protein phosphatase 2C 52 of Arabidopsis thaliana (Mouse-ear cress).